The primary structure comprises 50 residues: Large ribosomal subunit protein bL33 (50 aa).

Belongs to the bacterial ribosomal protein bL33 family.

This chain is Large ribosomal subunit protein bL33 (rpmG), found in Aquifex aeolicus (strain VF5).